The sequence spans 501 residues: Beta-secretase 1 (501 aa).

A signal peptide spans 1-21; that stretch reads MAPALRWLLLWVGSGMLPAQG. Residues 22–45 constitute a propeptide that is removed on maturation; that stretch reads THLGIRLPLRSGLAGPPLGLRLPR. The Extracellular segment spans residues 22–457; sequence THLGIRLPLR…PQTDESTLMT (436 aa). The 342-residue stretch at 75 to 416 folds into the Peptidase A1 domain; that stretch reads YYVEMTVGSP…DRARKRIGFA (342 aa). The active site involves Asp-93. Lys-126 carries the N6-acetyllysine modification. Asn-153, Asn-172, and Asn-223 each carry an N-linked (GlcNAc...) asparagine glycan. 3 disulfides stabilise this stretch: Cys-216-Cys-420, Cys-278-Cys-443, and Cys-330-Cys-380. N6-acetyllysine occurs at positions 275, 279, and 285. Asp-289 is an active-site residue. 3 positions are modified to N6-acetyllysine: Lys-299, Lys-300, and Lys-307. Residue Asn-354 is glycosylated (N-linked (GlcNAc...) asparagine). A helical membrane pass occupies residues 458 to 478; the sequence is IAYVMAAICALFMLPLCLMVC. 4 S-palmitoyl cysteine lipidation sites follow: Cys-474, Cys-478, Cys-482, and Cys-485. Topologically, residues 479 to 501 are cytoplasmic; it reads QWRCLRCLRHQHDDFADDISLLK. The interaction with RTN3 stretch occupies residues 479 to 501; that stretch reads QWRCLRCLRHQHDDFADDISLLK. The DXXLL signature appears at 496-500; the sequence is DISLL. Ser-498 is subject to Phosphoserine. Lys-501 is covalently cross-linked (Glycyl lysine isopeptide (Lys-Gly) (interchain with G-Cter in ubiquitin)).

This sequence belongs to the peptidase A1 family. Monomer. Interacts (via DXXLL motif) with GGA1, GGA2 and GGA3 (via their VHS domain); the interaction highly increases when BACE1 is phosphorylated at Ser-498. Interacts with RTN1; RTN2; RTN3 and RTN4; the interaction leads to inhibition of amyloid precursor protein processing. Interacts with SNX6. Interacts with PCSK9. Interacts with NAT8 and NAT8B. Interacts with BIN1. Interacts (via extracellular domain) with ADAM10 (via extracellular domain). Interacts with SORL1; this interaction may affect binding with APP and hence reduce APP cleavage. Interacts with NRDC AND NRG1. In terms of processing, palmitoylation mediates lipid raft localization. Acetylated in the endoplasmic reticulum at Lys-126, Lys-275, Lys-279, Lys-285, Lys-299, Lys-300 and Lys-307. Acetylation by NAT8 and NAT8B is transient and deacetylation probably occurs in the Golgi. Acetylation regulates the maturation, the transport to the plasma membrane, the stability and the expression of the protein. Post-translationally, ubiquitinated at Lys-501, ubiquitination leads to lysosomal degradation. Monoubiquitinated and 'Lys-63'-linked polyubitinated. Deubiquitnated by USP8; inhibits lysosomal degradation. In terms of processing, phosphorylation at Ser-498 is required for interaction with GGA1 and retrograded transport from endosomal compartments to the trans-Golgi network. Non-phosphorylated BACE1 enters a direct recycling route to the cell surface. N-Glycosylated. Addition of a bisecting N-acetylglucosamine by MGAT3 blocks lysosomal targeting, further degradation and is required for maintaining stability under stress conditions.

It is found in the cell membrane. The protein resides in the golgi apparatus. The protein localises to the trans-Golgi network. Its subcellular location is the endoplasmic reticulum. It localises to the endosome. It is found in the cell surface. The protein resides in the cytoplasmic vesicle membrane. The protein localises to the membrane raft. Its subcellular location is the lysosome. It localises to the late endosome. It is found in the early endosome. The protein resides in the recycling endosome. The protein localises to the cell projection. Its subcellular location is the axon. It localises to the dendrite. It carries out the reaction Broad endopeptidase specificity. Cleaves Glu-Val-Asn-Leu-|-Asp-Ala-Glu-Phe in the Swedish variant of Alzheimer's amyloid precursor protein.. Its activity is regulated as follows. Inhibited by RTN3 and RTN4. Functionally, responsible for the proteolytic processing of the amyloid precursor protein (APP). Cleaves at the N-terminus of the A-beta peptide sequence, between residues 671 and 672 of APP, leads to the generation and extracellular release of beta-cleaved soluble APP, and a corresponding cell-associated C-terminal fragment which is later released by gamma-secretase. Cleaves CHL1. This chain is Beta-secretase 1 (Bace1), found in Rattus norvegicus (Rat).